We begin with the raw amino-acid sequence, 162 residues long: Epoxidase pydX (162 aa).

The signal sequence occupies residues 1–26 (MSLIALPLRLLRLLPAITSTWVLAFA). The next 2 membrane-spanning stretches (helical) occupy residues 62–82 (WILI…LFVG) and 89–109 (TGAM…MGYM). 2 N-linked (GlcNAc...) asparagine glycosylation sites follow: N127 and N139.

Belongs to the epoxidase xenD family.

Its subcellular location is the membrane. The protein operates within mycotoxin biosynthesis. Epoxidase; part of the gene cluster that mediates the biosynthesis of pyrrocidines, fungal natural products containing a macrocyclic para-cyclophane connected to a decahydrofluorene ring system that show potent antibiotic activities toward Gram-negative bacteria. Within the pathway, pydX functions synergistically with pydB, pydE and pydZ to form the cyclophane. The pathway begins with the PKS-NRPS pydA which, with the help of the trans-enoyl reductase pydC, synthesizes the polyketide-tyrosyl acyl thioester product which can be reductively off-loaded by the terminal reductase (R) domain in pydA. The alpha/beta hydrolase pydG is then required to catalyze the subsequent Knoevenagel condensation that affords the 3-pyrrolin-2-one ring, whereas the four proteins pydB, pydE, pydX and pydZ then function synergistically to form the cyclophane. PydB and the membrane-bound pydX and pydZ are lipid-binding proteins that can sequester and mold the pdyG product into the inverse S-shape. Binding of the medium chain reductase pydE to the complex would trigger the cascade oxidative cyclization. PydY is involved in the Diels-Alder cycloaddition that forms the decahydrofluorene core. Additional non-enzymatic hydroxylation yields pyrrocidine A2 which can be further reduced into pyrrocidine B by an endogenous reductase. This is Epoxidase pydX from Acremonium sp.